The primary structure comprises 1475 residues: Mediator of RNA polymerase II transcription subunit 1.1 (1475 aa).

3 disordered regions span residues 579 to 600 (STIG…LTSM), 645 to 894 (GLAS…KMRE), and 908 to 1475 (PDVE…IDDE). A compositionally biased stretch (low complexity) spans 655 to 666 (PVAAAAAAPGGP). The segment covering 755-766 (QRSSSEQHNPNP) has biased composition (polar residues). Positions 767 to 800 (HQMSQYQMQQYQQNQQFRMHQMQQQQQQQFQMQS) are enriched in low complexity. Positions 810 to 819 (TDEDSDEECD) are enriched in acidic residues. Residues 829 to 838 (STSSRMSSVP) are compositionally biased toward low complexity. Pro residues predominate over residues 869 to 880 (TPSPLSAPPKPF). Residues 915–929 (QQLSSSSSSSQAEAS) are compositionally biased toward low complexity. Residues 941-952 (PPKPSSSSAPPP) are compositionally biased toward pro residues. Low complexity-rich tracts occupy residues 969–989 (QQEQ…SELA) and 1037–1049 (QKPT…STSS). Basic and acidic residues-rich tracts occupy residues 1052-1070 (PPKK…EKLI), 1080-1148 (VVDD…EKEP), and 1155-1180 (EKKD…KEYS). The stretch at 1098-1135 (DRDRDEDREKVRDKEDKAQREKDKKEKERERRRQRDRD) forms a coiled coil. A compositionally biased stretch (polar residues) spans 1181 to 1193 (KASTTSLIPTLSL). Positions 1199–1215 (PKKDTVEEEKKDVKEEA) are enriched in basic and acidic residues. Positions 1242-1252 (APVAPAVQQQQ) are enriched in low complexity. Positions 1281–1291 (PLQPPPPPQMT) are enriched in pro residues. Residues 1308-1317 (PGSSRPSGNR) show a composition bias toward polar residues. 2 stretches are compositionally biased toward pro residues: residues 1320 to 1334 (PLPP…PPPD) and 1425 to 1440 (PPAP…PKDP).

This sequence belongs to the Mediator complex subunit 1 family. In terms of assembly, component of the Mediator complex.

Its subcellular location is the nucleus. Component of the Mediator complex, a coactivator involved in the regulated transcription of nearly all RNA polymerase II-dependent genes. Mediator functions as a bridge to convey information from gene-specific regulatory proteins to the basal RNA polymerase II transcription machinery. Mediator is recruited to promoters by direct interactions with regulatory proteins and serves as a scaffold for the assembly of a functional preinitiation complex with RNA polymerase II and the general transcription factors. This chain is Mediator of RNA polymerase II transcription subunit 1.1 (sop-3), found in Caenorhabditis elegans.